Here is a 581-residue protein sequence, read N- to C-terminus: Suppressor of cytokine signaling 7 (581 aa).

4 disordered regions span residues 1–23 (MVFR…EPGP), 89–109 (PPPP…DPTE), 123–272 (EAES…RTQS), and 297–316 (QRGL…RRSL). Pro residues-rich tracts occupy residues 89–99 (PPPPQPQPPAA), 154–164 (PPGPELPPVPF), and 187–198 (QPPPPPPPPGPL). A mediates interaction with SORBS3 region spans residues 124-494 (AESLETNSCS…GKFLYFLRSR (371 aa)). Over residues 208–219 (GSFKIRLSRLFR) the composition is skewed to basic residues. A compositionally biased stretch (pro residues) spans 303–313 (PHPPTPPPPPR). Residues 400–509 (WYWGPMNWED…PTPVQLLYPV (110 aa)) enclose the SH2 domain. Residues 504–554 (QLLYPVSRFSNVKSLQHLCRFRIRQLVRIDHIPDLPLPKPLISYIRKFYYY) form the SOCS box domain.

As to quaternary structure, substrate-recognition component of the ECS(SOCS7) complex, composed of SOCS7, CUL5, ELOB, ELOC and RNF7/RBX2. Interacts, via the third proline-rich region, with the second SH3 domain of the adapter protein NCK1. Also interacts with GRB2, INSR, PLCG1, SORBS3/vinexin, and phosphorylated STAT3 and STAT5. Interacts with SEPT6. Interacts with phosphorylated IRS4 and PIK3R1. As to expression, expressed in brain and leukocytes. Also in fetal lung fibroblasts and fetal brain.

It localises to the cytoplasm. The protein resides in the nucleus. The protein localises to the cell membrane. It functions in the pathway protein modification; protein ubiquitination. In terms of biological role, substrate-recognition component of a cullin-5-RING E3 ubiquitin-protein ligase complex (ECS complex, also named CRL5 complex), which mediates the ubiquitination and subsequent proteasomal degradation of target proteins, such as DAB1 and IRS1. Specifically recognizes and binds phosphorylated proteins via its SH2 domain, promoting their ubiquitination. The ECS(SOCS7) complex acts as a key regulator of reelin signaling by mediating ubiquitination and degradation of phosphorylated DAB1 in the cortical plate of the developing cerebral cortex, thereby regulating neuron positioning during cortex development. Functions in insulin signaling and glucose homeostasis through IRS1 ubiquitination and subsequent proteasomal degradation. Also inhibits prolactin, growth hormone and leptin signaling by preventing STAT3 and STAT5 activation, sequestering them in the cytoplasm and reducing their binding to DNA. The polypeptide is Suppressor of cytokine signaling 7 (Homo sapiens (Human)).